The chain runs to 650 residues: SPARC-like protein 1 (650 aa).

An N-terminal signal peptide occupies residues 1–16; the sequence is MKAVLLLLCALGTAVA. The segment at 51–352 is disordered; it reads TADIENHPSD…HGAGDDYFIP (302 aa). Basic and acidic residues predominate over residues 54 to 64; it reads IENHPSDKAEK. Phosphoserine occurs at positions 70, 78, and 86. The segment covering 75–85 has biased composition (basic and acidic residues); sequence HEQSTEQDKTY. The span at 91–101 shows a compositional bias: acidic residues; sequence LKDEEDGDGDL. Composition is skewed to polar residues over residues 116–126 and 135–148; these read EGTSEPQQKSL and TVST…QRAN. Asn-148 is a glycosylation site (N-linked (GlcNAc...) asparagine). Phosphoserine is present on residues Ser-155 and Ser-163. Residues 157–174 show a composition bias toward polar residues; the sequence is EQPVSDSHQQPNESSKQT. Residue Asn-168 is glycosylated (N-linked (GlcNAc...) asparagine). The span at 189-210 shows a compositional bias: acidic residues; that stretch reads IPNEEEEEEEDEEEEEEEEPED. Position 272 is a phosphoserine (Ser-272). Residues 277–299 are compositionally biased toward basic and acidic residues; sequence EDKAAGSKEHIPHTEQQDQEGKA. Phosphoserine is present on Ser-353. Residues 375–415 are disordered; sequence EETTTGESENRREAADNQEAKKAESSPNAEPSDEGNSREHS. The span at 382–398 shows a compositional bias: basic and acidic residues; it reads SENRREAADNQEAKKAE. Phosphoserine is present on Ser-406. Residues 418–440 enclose the Follistatin-like domain; it reads SCTNFQCKRGHICKTDPQGKPHC. Intrachain disulfides connect Cys-419-Cys-430, Cys-424-Cys-440, Cys-442-Cys-476, Cys-448-Cys-469, Cys-458-Cys-495, Cys-501-Cys-612, and Cys-620-Cys-636. The Kazal-like domain maps to 436–497; sequence GKPHCVCQDP…QLDYFGACKS (62 aa). N-linked (GlcNAc...) asparagine glycosylation occurs at Asn-462. The EF-hand domain occupies 608-643; sequence PMEHCITRFFEECDPNKDKHITLKEWGHCFGIKEED. Ca(2+) is bound by residues Asp-621, Asn-623, Asp-625, His-627, and Glu-632.

The protein belongs to the SPARC family. Highest expression in brain. Moderate levels in heart, adrenal gland, epididymis and lung. Low levels in kidney, eye, liver, spleen, submandibular gland and testis.

The protein resides in the secreted. Its subcellular location is the extracellular space. It localises to the extracellular matrix. This chain is SPARC-like protein 1 (Sparcl1), found in Mus musculus (Mouse).